We begin with the raw amino-acid sequence, 58 residues long: Leucine zipper protein 6 (58 aa).

As to expression, widely expressed, highest levels found in brain, placenta, spleen, testis, and ovary. Up-regulated in some tumor cells.

In Homo sapiens (Human), this protein is Leucine zipper protein 6 (LUZP6).